A 142-amino-acid polypeptide reads, in one-letter code: Large ribosomal subunit protein uL11 (142 aa).

It belongs to the universal ribosomal protein uL11 family. Part of the ribosomal stalk of the 50S ribosomal subunit. Interacts with L10 and the large rRNA to form the base of the stalk. L10 forms an elongated spine to which L12 dimers bind in a sequential fashion forming a multimeric L10(L12)X complex. In terms of processing, one or more lysine residues are methylated.

Forms part of the ribosomal stalk which helps the ribosome interact with GTP-bound translation factors. The chain is Large ribosomal subunit protein uL11 from Rhizobium meliloti (strain 1021) (Ensifer meliloti).